The sequence spans 381 residues: 4-hydroxyphenylpyruvate dioxygenase (381 aa).

VOC domains are found at residues 22-156 and 184-338; these read GMDA…LVER and AVDH…IFTK. His-187, His-270, and Glu-349 together coordinate Fe cation.

The protein belongs to the 4HPPD family. As to quaternary structure, homodimer. It depends on Fe cation as a cofactor.

The catalysed reaction is 3-(4-hydroxyphenyl)pyruvate + O2 = homogentisate + CO2. It participates in amino-acid degradation; L-phenylalanine degradation; acetoacetate and fumarate from L-phenylalanine: step 3/6. In Streptomyces coelicolor (strain ATCC BAA-471 / A3(2) / M145), this protein is 4-hydroxyphenylpyruvate dioxygenase (hpd).